The chain runs to 445 residues: UPF0210 protein LACR_1020 (445 aa).

The protein belongs to the UPF0210 family. As to quaternary structure, homodimer.

This chain is UPF0210 protein LACR_1020, found in Lactococcus lactis subsp. cremoris (strain SK11).